The following is a 180-amino-acid chain: ATP synthase subunit delta (180 aa).

It belongs to the ATPase delta chain family. In terms of assembly, F-type ATPases have 2 components, F(1) - the catalytic core - and F(0) - the membrane proton channel. F(1) has five subunits: alpha(3), beta(3), gamma(1), delta(1), epsilon(1). F(0) has three main subunits: a(1), b(2) and c(10-14). The alpha and beta chains form an alternating ring which encloses part of the gamma chain. F(1) is attached to F(0) by a central stalk formed by the gamma and epsilon chains, while a peripheral stalk is formed by the delta and b chains.

The protein resides in the cell inner membrane. Functionally, f(1)F(0) ATP synthase produces ATP from ADP in the presence of a proton or sodium gradient. F-type ATPases consist of two structural domains, F(1) containing the extramembraneous catalytic core and F(0) containing the membrane proton channel, linked together by a central stalk and a peripheral stalk. During catalysis, ATP synthesis in the catalytic domain of F(1) is coupled via a rotary mechanism of the central stalk subunits to proton translocation. Its function is as follows. This protein is part of the stalk that links CF(0) to CF(1). It either transmits conformational changes from CF(0) to CF(1) or is implicated in proton conduction. The sequence is that of ATP synthase subunit delta from Legionella pneumophila subsp. pneumophila (strain Philadelphia 1 / ATCC 33152 / DSM 7513).